We begin with the raw amino-acid sequence, 222 residues long: 7-cyano-7-deazaguanine synthase (222 aa).

F14 to L24 serves as a coordination point for ATP. 4 residues coordinate Zn(2+): C190, C199, C202, and C205.

It belongs to the QueC family. Homodimer. It depends on Zn(2+) as a cofactor.

The catalysed reaction is 7-carboxy-7-deazaguanine + NH4(+) + ATP = 7-cyano-7-deazaguanine + ADP + phosphate + H2O + H(+). The protein operates within purine metabolism; 7-cyano-7-deazaguanine biosynthesis. Its function is as follows. Catalyzes the ATP-dependent conversion of 7-carboxy-7-deazaguanine (CDG) to 7-cyano-7-deazaguanine (preQ(0)). This is 7-cyano-7-deazaguanine synthase from Staphylococcus aureus (strain bovine RF122 / ET3-1).